Here is a 257-residue protein sequence, read N- to C-terminus: MLITISPAKTLDYTSPLATTRYTQPELLDYSSQLIDVCKKLTPAQIASLMSISDKLADLNAGRFSEWHPDFTPENARQALLAFKGDVYTGLAAEDFSEDDFDFAQQHLRMLSGLYGVLRPLDLMRPYRLEMGTKLENKAGKDLYSFWGDTITEKLNQALREQGDDVLVNLASDEYFKAVKPKKLNARLIKPVFLDEKNGKFKVISFYAKKARGLMSRFIIQNRLTQPEQLKAFNLDGYFFEAADSSADELVFKRHEQ.

Belongs to the UPF0246 family.

The protein is UPF0246 protein PC1_3665 of Pectobacterium carotovorum subsp. carotovorum (strain PC1).